Here is a 137-residue protein sequence, read N- to C-terminus: MIEEKKELKKRRVLQMARFYGAAAFTLITMRLISRAIKVRKYVPSIFQQNYKLPPFSQRNEAMSALTYASAASIGTFSTLIFGFCWALDISTAREFVFKTREFMSLPQALETDTSMDEETSKLTKQLQDLLSSENNK.

A run of 2 helical transmembrane segments spans residues 20–37 (YGAAAFTLITMRLISRAI) and 66–88 (LTYASAASIGTFSTLIFGFCWAL).

The protein belongs to the AIM11 family.

The protein localises to the membrane. This Saccharomyces cerevisiae (strain RM11-1a) (Baker's yeast) protein is Altered inheritance of mitochondria protein 11 (AIM11).